We begin with the raw amino-acid sequence, 617 residues long: Kelch-like protein 9 (617 aa).

The BTB domain occupies 50–119; that stretch reads CDVTLVPGDG…IYTAKLSLNM (70 aa). In terms of domain architecture, BACK spans 154 to 255; the sequence is CVEVGRIANT…TPQDLINYVQ (102 aa). Kelch repeat units lie at residues 299–347, 348–399, 400–446, 448–493, 495–545, and 546–594; these read HLVT…VIGN, FLYV…ALKG, HLYA…VYGG, MYIS…TVGD, LYVI…VFEN, and KIYV…TLTV. The segment at 595-617 is disordered; sequence FPPEENPGSPSRESPLSAPSDHS.

Component of the BCR(KLHL9-KLHL13) E3 ubiquitin ligase complex, at least composed of CUL3, KLHL9, KLHL13 and RBX1. Interacts with AURKB.

Its pathway is protein modification; protein ubiquitination. In terms of biological role, substrate-specific adapter of a BCR (BTB-CUL3-RBX1) E3 ubiquitin-protein ligase complex required for mitotic progression and cytokinesis. The BCR(KLHL9-KLHL13) E3 ubiquitin ligase complex mediates the ubiquitination of AURKB and controls the dynamic behavior of AURKB on mitotic chromosomes and thereby coordinates faithful mitotic progression and completion of cytokinesis. This chain is Kelch-like protein 9 (Klhl9), found in Mus musculus (Mouse).